Reading from the N-terminus, the 316-residue chain is Acetaldehyde dehydrogenase (316 aa).

Ser11 to Ile14 contacts NAD(+). Cys131 serves as the catalytic Acyl-thioester intermediate. NAD(+) is bound by residues Ser162–Asn170 and Asn289.

Belongs to the acetaldehyde dehydrogenase family. In terms of assembly, interacts with MhpE.

It catalyses the reaction acetaldehyde + NAD(+) + CoA = acetyl-CoA + NADH + H(+). Its pathway is aromatic compound metabolism; 3-phenylpropanoate degradation. Functionally, catalyzes the conversion of acetaldehyde to acetyl-CoA, using NAD(+) and coenzyme A. Is the final enzyme in the meta-cleavage pathway for the degradation of aromatic compounds. The sequence is that of Acetaldehyde dehydrogenase from Shigella sonnei (strain Ss046).